The chain runs to 208 residues: Thymidylate kinase (208 aa).

10 to 17 (GPEGSGKT) is a binding site for ATP.

This sequence belongs to the thymidylate kinase family.

It carries out the reaction dTMP + ATP = dTDP + ADP. Phosphorylation of dTMP to form dTDP in both de novo and salvage pathways of dTTP synthesis. The chain is Thymidylate kinase from Bacillus cereus (strain ATCC 14579 / DSM 31 / CCUG 7414 / JCM 2152 / NBRC 15305 / NCIMB 9373 / NCTC 2599 / NRRL B-3711).